We begin with the raw amino-acid sequence, 411 residues long: Dihydrolipoyllysine-residue succinyltransferase component of 2-oxoglutarate dehydrogenase complex (411 aa).

The 76-residue stretch at T2–E77 folds into the Lipoyl-binding domain. K43 is modified (N6-lipoyllysine). Over residues S82 to E100 the composition is skewed to low complexity. The tract at residues S82–S115 is disordered. A compositionally biased stretch (polar residues) spans L101–M110. Residues P111–L148 form the Peripheral subunit-binding (PSBD) domain. Residues H382 and D386 contribute to the active site.

Belongs to the 2-oxoacid dehydrogenase family. As to quaternary structure, forms a 24-polypeptide structural core with octahedral symmetry. Part of the 2-oxoglutarate dehydrogenase (OGDH) complex composed of E1 (2-oxoglutarate dehydrogenase), E2 (dihydrolipoamide succinyltransferase) and E3 (dihydrolipoamide dehydrogenase); the complex contains multiple copies of the three enzymatic components (E1, E2 and E3). (R)-lipoate serves as cofactor.

The catalysed reaction is N(6)-[(R)-dihydrolipoyl]-L-lysyl-[protein] + succinyl-CoA = N(6)-[(R)-S(8)-succinyldihydrolipoyl]-L-lysyl-[protein] + CoA. Its pathway is amino-acid degradation; L-lysine degradation via saccharopine pathway; glutaryl-CoA from L-lysine: step 6/6. Functionally, E2 component of the 2-oxoglutarate dehydrogenase (OGDH) complex which catalyzes the second step in the conversion of 2-oxoglutarate to succinyl-CoA and CO(2). In Bartonella vinsonii subsp. berkhoffii, this protein is Dihydrolipoyllysine-residue succinyltransferase component of 2-oxoglutarate dehydrogenase complex (sucB).